The sequence spans 379 residues: MNQAVIVAAKRTAFGKYGGTLKHLEPEQLLKPLFQHFKEKYPEVISKIDDVVLGNVVGNGGNIARKALLEAGLKDSIPGVTIDRQCGSGLESVQYACRMIQAGAGKVYIAGGVESTSRAPWKIKRPHSVYETALPEFYERASFAPEMSDPSMIQGAENVAKMYDVSRELQDEFAYRSHQLTAENVKNGNISQEILPITVKGEIFNTDESLKSHIPKDNFGRFKPVIKGGTVTAANSCMKNDGAVLLLIMEKDMAYELGFEHGLLFKDGVTVGVDSNFPGIGPVPAISNLLKRNQLTIENIEVIEINEAFSAQVVACQQALNISNTQLNIWGGALASGHPYGASGAQLVTRLFYMFDKETMIASMGIGGGLGNAALFTRF.

The active-site Acyl-thioester intermediate is C86. Catalysis depends on H338, which acts as the Proton acceptor.

The protein belongs to the thiolase-like superfamily. Thiolase family.

This chain is Putative acetyl-CoA C-acetyltransferase VraB (vraB), found in Staphylococcus aureus (strain Mu3 / ATCC 700698).